We begin with the raw amino-acid sequence, 146 residues long: Mite group 2 allergen Der f 2 (146 aa).

An N-terminal signal peptide occupies residues 1 to 17; the sequence is MISKILCLSLLVAAVVA. 3 cysteine pairs are disulfide-bonded: cysteine 25-cysteine 136, cysteine 38-cysteine 44, and cysteine 90-cysteine 95.

It belongs to the NPC2 family.

The protein resides in the secreted. This Dermatophagoides farinae (American house dust mite) protein is Mite group 2 allergen Der f 2 (DERF2).